Consider the following 85-residue polypeptide: Large ribosomal subunit protein bL27 (85 aa).

The tract at residues 1-22 (MAHKKAGGSTRNGRDSESKRLG) is disordered.

This sequence belongs to the bacterial ribosomal protein bL27 family.

The sequence is that of Large ribosomal subunit protein bL27 from Marinomonas sp. (strain MWYL1).